The chain runs to 262 residues: Translation initiation factor 2 subunit alpha (262 aa).

Positions 15–86 (GELVVGTVHK…RKGHVDVSMK (72 aa)) constitute an S1 motif domain.

This sequence belongs to the eIF-2-alpha family. In terms of assembly, heterotrimer composed of an alpha, a beta and a gamma chain.

In terms of biological role, eIF-2 functions in the early steps of protein synthesis by forming a ternary complex with GTP and initiator tRNA. In Methanothermobacter thermautotrophicus (strain ATCC 29096 / DSM 1053 / JCM 10044 / NBRC 100330 / Delta H) (Methanobacterium thermoautotrophicum), this protein is Translation initiation factor 2 subunit alpha (eif2a).